We begin with the raw amino-acid sequence, 478 residues long: Cytochrome c-552 (478 aa).

The first 26 residues, 1-26, serve as a signal peptide directing secretion; sequence MARKTLRARRFFSLIFPFFFITSVYA. His94 lines the heme c pocket. Positions 122, 125, and 126 each coordinate heme. Cys160, Cys163, His164, Cys209, Cys212, and His213 together coordinate heme c. Glu215, Tyr216, Lys261, and Gln263 together coordinate Ca(2+). Residue Tyr216 participates in substrate binding. His264 contacts substrate. 9 residues coordinate heme c: His275, Cys282, Cys285, His286, His301, Cys314, Cys317, His318, and His393.

The protein belongs to the cytochrome c-552 family. Ca(2+) is required as a cofactor. It depends on heme c as a cofactor.

It localises to the periplasm. It carries out the reaction 6 Fe(III)-[cytochrome c] + NH4(+) + 2 H2O = 6 Fe(II)-[cytochrome c] + nitrite + 8 H(+). It participates in nitrogen metabolism; nitrate reduction (assimilation). Its function is as follows. Catalyzes the reduction of nitrite to ammonia, consuming six electrons in the process. In Salmonella schwarzengrund (strain CVM19633), this protein is Cytochrome c-552.